The following is a 160-amino-acid chain: Small ribosomal subunit protein bS6 (160 aa).

Basic and acidic residues-rich tracts occupy residues 94 to 119 and 125 to 152; these read EEHE…RGGR and RGDR…REDA. The segment at 94-160 is disordered; the sequence is EEHEEGPSAM…DADTAAASEE (67 aa).

Belongs to the bacterial ribosomal protein bS6 family.

In terms of biological role, binds together with bS18 to 16S ribosomal RNA. In Rhodopseudomonas palustris (strain BisB5), this protein is Small ribosomal subunit protein bS6.